The following is a 398-amino-acid chain: LL-diaminopimelate aminotransferase (398 aa).

Residues Y14 and G41 each contribute to the substrate site. Pyridoxal 5'-phosphate is bound by residues Y71, 104 to 105 (AK), Y128, N174, Y205, and 233 to 235 (SFS). Substrate is bound by residues K105, Y128, and N174. K236 carries the N6-(pyridoxal phosphate)lysine modification. R244 and N275 together coordinate pyridoxal 5'-phosphate. Positions 275 and 368 each coordinate substrate.

It belongs to the class-I pyridoxal-phosphate-dependent aminotransferase family. LL-diaminopimelate aminotransferase subfamily. Homodimer. It depends on pyridoxal 5'-phosphate as a cofactor.

It carries out the reaction (2S,6S)-2,6-diaminopimelate + 2-oxoglutarate = (S)-2,3,4,5-tetrahydrodipicolinate + L-glutamate + H2O + H(+). It participates in amino-acid biosynthesis; L-lysine biosynthesis via DAP pathway; LL-2,6-diaminopimelate from (S)-tetrahydrodipicolinate (aminotransferase route): step 1/1. In terms of biological role, involved in the synthesis of meso-diaminopimelate (m-DAP or DL-DAP), required for both lysine and peptidoglycan biosynthesis. Catalyzes the direct conversion of tetrahydrodipicolinate to LL-diaminopimelate. The protein is LL-diaminopimelate aminotransferase of Chlamydia felis (strain Fe/C-56) (Chlamydophila felis).